Reading from the N-terminus, the 225-residue chain is tRNA (guanine-N(1)-)-methyltransferase (225 aa).

Residues Gly112 and 132–137 (IGDYVL) each bind S-adenosyl-L-methionine.

Belongs to the RNA methyltransferase TrmD family. In terms of assembly, homodimer.

It localises to the cytoplasm. The enzyme catalyses guanosine(37) in tRNA + S-adenosyl-L-methionine = N(1)-methylguanosine(37) in tRNA + S-adenosyl-L-homocysteine + H(+). Functionally, specifically methylates guanosine-37 in various tRNAs. The chain is tRNA (guanine-N(1)-)-methyltransferase from Bacteroides fragilis (strain ATCC 25285 / DSM 2151 / CCUG 4856 / JCM 11019 / LMG 10263 / NCTC 9343 / Onslow / VPI 2553 / EN-2).